The following is a 28-amino-acid chain: Cliotide T21 (28 aa).

Residues Asp-1–Asn-28 constitute a cross-link (cyclopeptide (Asp-Asn)). 3 disulfide bridges follow: Cys-4-Cys-17, Cys-8-Cys-19, and Cys-13-Cys-25.

Contains 3 disulfide bonds. In terms of processing, this is a cyclic peptide. Expressed in root nodules but not in seed.

In terms of biological role, probably participates in a plant defense mechanism. Not active against Gram-negative bacterium E.coli ATCC 700926 or Gram-positive bacterium S.aureus ATCC 12600 up to a concentration of 100 uM under low-salt conditions. The chain is Cliotide T21 from Clitoria ternatea (Butterfly pea).